Consider the following 694-residue polypeptide: Elongation factor G (694 aa).

In terms of domain architecture, tr-type G spans 6 to 288; it reads KLYRNIGIAA…GVIEYLPSPT (283 aa). GTP contacts are provided by residues 15 to 22, 86 to 90, and 140 to 143; these read AHVDAGKT, DTPGH, and NKMD.

This sequence belongs to the TRAFAC class translation factor GTPase superfamily. Classic translation factor GTPase family. EF-G/EF-2 subfamily.

The protein resides in the cytoplasm. In terms of biological role, catalyzes the GTP-dependent ribosomal translocation step during translation elongation. During this step, the ribosome changes from the pre-translocational (PRE) to the post-translocational (POST) state as the newly formed A-site-bound peptidyl-tRNA and P-site-bound deacylated tRNA move to the P and E sites, respectively. Catalyzes the coordinated movement of the two tRNA molecules, the mRNA and conformational changes in the ribosome. The chain is Elongation factor G from Legionella pneumophila (strain Lens).